Reading from the N-terminus, the 223-residue chain is Putative 3-methyladenine DNA glycosylase (223 aa).

This sequence belongs to the DNA glycosylase MPG family.

This Rickettsia typhi (strain ATCC VR-144 / Wilmington) protein is Putative 3-methyladenine DNA glycosylase.